Consider the following 420-residue polypeptide: UDP-N-acetyl-D-mannosamine dehydrogenase (420 aa).

Tyrosine 13, isoleucine 14, aspartate 33, threonine 85, and threonine 126 together coordinate NAD(+). UDP-N-acetyl-alpha-D-mannosaminouronate is bound by residues arginine 160, valine 161, lysine 212, asparagine 216, arginine 219, histidine 250, arginine 252, and glycine 263. Lysine 212 acts as the Proton donor/acceptor in catalysis. The active-site Nucleophile is the cysteine 266. UDP-N-acetyl-alpha-D-mannosaminouronate-binding residues include phenylalanine 330 and lysine 331. Residue arginine 338 coordinates NAD(+). Lysine 416 provides a ligand contact to UDP-N-acetyl-alpha-D-mannosaminouronate.

This sequence belongs to the UDP-glucose/GDP-mannose dehydrogenase family. WecC subfamily. In terms of assembly, homodimer.

The enzyme catalyses UDP-N-acetyl-alpha-D-mannosamine + 2 NAD(+) + H2O = UDP-N-acetyl-alpha-D-mannosaminouronate + 2 NADH + 3 H(+). Its pathway is bacterial outer membrane biogenesis; enterobacterial common antigen biosynthesis. Its function is as follows. Catalyzes the four-electron oxidation of UDP-N-acetyl-D-mannosamine (UDP-ManNAc), reducing NAD(+) and releasing UDP-N-acetylmannosaminuronic acid (UDP-ManNAcA). The chain is UDP-N-acetyl-D-mannosamine dehydrogenase from Salmonella typhimurium (strain LT2 / SGSC1412 / ATCC 700720).